Consider the following 306-residue polypeptide: Cysteine synthase (306 aa).

N6-(pyridoxal phosphate)lysine is present on Lys-46. Residues Asn-76, 180 to 184, and Ser-267 contribute to the pyridoxal 5'-phosphate site; that span reads GSGGT.

Belongs to the cysteine synthase/cystathionine beta-synthase family. Homodimer. Pyridoxal 5'-phosphate is required as a cofactor.

It carries out the reaction O-acetyl-L-serine + hydrogen sulfide = L-cysteine + acetate. The protein operates within amino-acid biosynthesis; L-cysteine biosynthesis; L-cysteine from L-serine: step 2/2. This chain is Cysteine synthase (cysM), found in Helicobacter pylori (strain ATCC 700392 / 26695) (Campylobacter pylori).